The chain runs to 357 residues: Sorbitol dehydrogenase 1 (357 aa).

A Zn(2+)-binding site is contributed by cysteine 43. Position 49 (tyrosine 49) interacts with substrate. Positions 68 and 69 each coordinate Zn(2+). Substrate is bound at residue glutamate 154. NAD(+)-binding positions include aspartate 202, lysine 207, 275-277 (VGM), and 299-301 (CFR). Substrate contacts are provided by arginine 301 and tyrosine 302.

Belongs to the zinc-containing alcohol dehydrogenase family. Homotetramer. The cofactor is Zn(2+).

It catalyses the reaction keto-D-fructose + NADH + H(+) = D-sorbitol + NAD(+). It carries out the reaction xylitol + NAD(+) = D-xylulose + NADH + H(+). Its function is as follows. Polyol dehydrogenase that catalyzes the reversible NAD(+)-dependent oxidation of various sugar alcohols. Is active with D-sorbitol (D-glucitol) and xylitol as substrates, leading to the C2-oxidized product D-fructose and D-xylulose, respectively. Is likely involved in the utilization of D-sorbitol as a sole carbon source for growth. Has no activity on mannitol and primary alcohols such as ethanol. This chain is Sorbitol dehydrogenase 1 (SOR1), found in Saccharomyces cerevisiae (strain ATCC 204508 / S288c) (Baker's yeast).